The following is a 446-amino-acid chain: Histone acetyltransferase type B subunit 2 (446 aa).

WD repeat units lie at residues 138-178 (DHPG…ITPS), 189-229 (GHKE…GTSK), 231-270 (LKYS…QIID), 286-326 (GHSD…SKVH), and 330-370 (GHQD…DEQT). Residues 372-376 (DDAED) form an interaction with the histone H4 N-terminus region. One copy of the WD 6 repeat lies at 387–427 (GHTNHLADFSWNRNDPWLVCSAAEDNLLQIWKVANSIVSKE). Positions 427–446 (EPADMSTPELDDPKPKQSSH) are disordered. The segment covering 437 to 446 (DDPKPKQSSH) has biased composition (basic and acidic residues).

Belongs to the WD repeat RBAP46/RBAP48/MSI1 family. Component of the HAT-B complex composed of at least hat-1 and hat-2. The HAT-B complex binds to histone H4 tail.

It is found in the cytoplasm. It localises to the nucleus. Functionally, regulatory subunit of the histone acetylase B (HAT-B) complex. The complex acetylates 'Lys-12' of histone H4 which is required for telomeric silencing. The chain is Histone acetyltransferase type B subunit 2 (hat-2) from Neurospora crassa (strain ATCC 24698 / 74-OR23-1A / CBS 708.71 / DSM 1257 / FGSC 987).